The sequence spans 102 residues: Acylphosphatase 1 (102 aa).

The region spanning 12–100 is the Acylphosphatase-like domain; that stretch reads TRLVRVRGRV…PRFDRFEQLP (89 aa). Residues Arg27 and Asn45 contribute to the active site.

The protein belongs to the acylphosphatase family.

It catalyses the reaction an acyl phosphate + H2O = a carboxylate + phosphate + H(+). The sequence is that of Acylphosphatase 1 (acyP1) from Ralstonia nicotianae (strain ATCC BAA-1114 / GMI1000) (Ralstonia solanacearum).